Consider the following 198-residue polypeptide: MIEFVYPHTQLVAGVDEVGRGPLVGAVVTAAVILDPARPIVGLNDSKKLSEKRRLALYDEIKEKALSWSLGRAEPHEIDELNILHATMLAMQRAVAGLHIAPEYVLIDGNRCPALPVPSMAVVKGDSRVAEISAASIIAKVTRDAEMAALDGIFPQYGFAQHKGYPTAFHLAALAEHGATEHHRRSFAPVKRALGLAS.

In terms of domain architecture, RNase H type-2 spans 10–198; sequence QLVAGVDEVG…PVKRALGLAS (189 aa). Residues D16, E17, and D108 each coordinate a divalent metal cation.

Belongs to the RNase HII family. Mn(2+) is required as a cofactor. Mg(2+) serves as cofactor.

The protein resides in the cytoplasm. The catalysed reaction is Endonucleolytic cleavage to 5'-phosphomonoester.. Endonuclease that specifically degrades the RNA of RNA-DNA hybrids. This chain is Ribonuclease HII, found in Citrobacter koseri (strain ATCC BAA-895 / CDC 4225-83 / SGSC4696).